We begin with the raw amino-acid sequence, 165 residues long: Disulfide bond formation protein B (165 aa).

The Cytoplasmic portion of the chain corresponds to 1–11; that stretch reads MICSKVPVRAW. The chain crosses the membrane as a helical span at residues 12 to 28; that stretch reads FATLGLGCLGLVAVGMA. Residues 29–46 are Periplasmic-facing; it reads LQTLLHLAPCPLCIFQRL. The cysteines at positions 38 and 41 are disulfide-linked. The helical transmembrane segment at 47–61 threads the bilayer; that stretch reads LYIMIGFVGLLGFVL. Over 62–66 the chain is Cytoplasmic; sequence PAGRL. The chain crosses the membrane as a helical span at residues 67 to 84; it reads LWSTLAAGLGVLGFGVAA. Residues 85-142 are Periplasmic-facing; the sequence is YQTWMQAFPDLAPECGFTDPNAIERLVDWLGMEWPSMFLATGFCTSRDWELLGLSMAN. Cys-99 and Cys-128 are disulfide-bonded. Residues 143–161 traverse the membrane as a helical segment; that stretch reads WSVLIFAGIVAYAVLLFVR. Residues 162–165 are Cytoplasmic-facing; the sequence is KDRA.

Belongs to the DsbB family.

The protein localises to the cell inner membrane. Functionally, required for disulfide bond formation in some periplasmic proteins. Acts by oxidizing the DsbA protein. The protein is Disulfide bond formation protein B of Dechloromonas aromatica (strain RCB).